The chain runs to 223 residues: uncharacterized protein (223 aa).

Helical transmembrane passes span 1–21 (MLII…TFYL) and 45–65 (ILIG…TSLI).

The protein localises to the cell membrane. This is an uncharacterized protein from Haemophilus influenzae (strain ATCC 51907 / DSM 11121 / KW20 / Rd).